A 276-amino-acid polypeptide reads, in one-letter code: Elongation factor Ts, mitochondrial (276 aa).

It belongs to the EF-Ts family.

Its subcellular location is the mitochondrion. Functionally, associates with the EF-Tu.GDP complex and induces the exchange of GDP to GTP. It remains bound to the aminoacyl-tRNA.EF-Tu.GTP complex up to the GTP hydrolysis stage on the ribosome. The sequence is that of Elongation factor Ts, mitochondrial from Leishmania infantum.